Consider the following 465-residue polypeptide: Pancreatic triacylglycerol lipase (465 aa).

An N-terminal signal peptide occupies residues 1 to 16 (MLLLWILSLFLETVAG). Cystine bridges form between C20-C26 and C107-C118. S169 serves as the catalytic Nucleophile. Catalysis depends on D193, which acts as the Charge relay system. Ca(2+)-binding residues include E204, R207, D209, and D212. The cysteines at positions 254 and 278 are disulfide-linked. Residue H280 is the Charge relay system of the active site. Intrachain disulfides connect C302–C313 and C316–C321. N-linked (GlcNAc...) asparagine glycans are attached at residues N351, N398, and N425. One can recognise a PLAT domain in the interval 355–465 (WRYRIAVTLS…EEVLLTLQPC (111 aa)). C449 and C465 are joined by a disulfide.

The protein belongs to the AB hydrolase superfamily. Lipase family. In terms of assembly, forms a 1:1 stoichiometric complex with (pro)colipase/CLPS.

Its subcellular location is the secreted. It catalyses the reaction a triacylglycerol + H2O = a diacylglycerol + a fatty acid + H(+). It carries out the reaction 1,2,3-tributanoylglycerol + H2O = dibutanoylglycerol + butanoate + H(+). The catalysed reaction is 1,2,3-tri-(9Z-octadecenoyl)-glycerol + H2O = di-(9Z)-octadecenoylglycerol + (9Z)-octadecenoate + H(+). The enzyme catalyses all-trans-retinyl hexadecanoate + H2O = all-trans-retinol + hexadecanoate + H(+). It catalyses the reaction 1,2-di-(9Z-octadecenoyl)-glycerol + H2O = (9Z-octadecenoyl)-glycerol + (9Z)-octadecenoate + H(+). With respect to regulation, inhibited by bile salts, is reactivated by (pro)colipase/CLPS. Its function is as follows. Plays an important role in fat metabolism. It preferentially splits the esters of long-chain fatty acids at positions 1 and 3, producing mainly 2-monoacylglycerol and free fatty acids, and shows considerably higher activity against insoluble emulsified substrates than against soluble ones. The sequence is that of Pancreatic triacylglycerol lipase (PNLIP) from Cavia porcellus (Guinea pig).